We begin with the raw amino-acid sequence, 319 residues long: Annexin A5 (319 aa).

At A2 the chain carries N-acetylalanine. Annexin repeat units follow at residues 13-84, 85-156, 168-240, and 244-315; these read FDGR…ALMK, PSRL…VLLQ, AQVE…AVVK, and SIPA…LLCG. K27 participates in a covalent cross-link: Glycyl lysine isopeptide (Lys-Gly) (interchain with G-Cter in SUMO1); alternate. A Glycyl lysine isopeptide (Lys-Gly) (interchain with G-Cter in SUMO2); alternate cross-link involves residue K27. Position 35 is a phosphoserine (S35). N6-acetyllysine occurs at positions 68, 74, 77, 95, and 99. K288 carries the N6-succinyllysine modification. Positions 312–318 match the [IL]-x-C-x-x-[DE] motif motif; sequence LLCGGED.

It belongs to the annexin family. Monomer. Binds ATRX, EIF5B and DNMT1. In terms of processing, S-nitrosylation is induced by interferon-gamma and oxidatively-modified low-densitity lipoprotein (LDL(ox)) possibly implicating the iNOS-S100A8/9 transnitrosylase complex.

Functionally, this protein is an anticoagulant protein that acts as an indirect inhibitor of the thromboplastin-specific complex, which is involved in the blood coagulation cascade. In Rattus norvegicus (Rat), this protein is Annexin A5 (Anxa5).